A 247-amino-acid polypeptide reads, in one-letter code: TLC domain-containing protein 1 (247 aa).

The first 27 residues, 1–27 (MPLLFHPAWPLLLGATLTFRALRRVLC), serve as a signal peptide directing secretion. Residues 28–46 (RLPQPAHVQTDPLRTWRWH) are Extracellular-facing. In terms of domain architecture, TLC spans 40 to 234 (LRTWRWHNLL…LLRSDFCPER (195 aa)). Residues 47–67 (NLLVSFTHSIVSGIWALLCLW) traverse the membrane as a helical segment. The Cytoplasmic portion of the chain corresponds to 68 to 83 (QTPEMLVEIETAWSAS). A helical membrane pass occupies residues 84 to 104 (GYLLVCFSAGYFIHDTVDIVV). At 105–123 (SKQTRASWEYLVHHVMAMG) the chain is on the extracellular side. Positions 124 to 144 (AFFSGIFWKRFVGGGVLTLLV) form an intramembrane region, helical. Residues 145–173 (EVSNIFLTLRMMMKINNAQDLLLYKVNKY) lie on the Extracellular side of the membrane. A helical membrane pass occupies residues 174–194 (INLVMYFLFRLAPQAYLTKFF). The Cytoplasmic segment spans residues 195-201 (LQYAGQR). Residues 202–222 (TLGTFLLAILLMLDLMIIIYF) form a helical membrane-spanning segment. Over 223–247 (SRLLRSDFCPERAPRRQQKDKFLTE) the chain is Extracellular.

The protein resides in the cell membrane. In terms of biological role, regulates the composition and fluidity of the plasma membrane. Inhibits the incorporation of membrane-fluidizing phospholipids containing omega-3 long-chain polyunsaturated fatty acids (LCPUFA) and thereby promotes membrane rigidity. Does not appear to have any effect on LCPUFA synthesis. This is TLC domain-containing protein 1 (Tlcd1) from Mus musculus (Mouse).